The following is a 245-amino-acid chain: Ribosomal RNA large subunit methyltransferase E (245 aa).

Residues 1–25 (MTKSPIGGNRSGRKLGQKVKKGKLK) form a disordered region. Basic residues predominate over residues 11–25 (SGRKLGQKVKKGKLK). S-adenosyl-L-methionine contacts are provided by glycine 81, tryptophan 83, aspartate 104, aspartate 120, and aspartate 144. The active-site Proton acceptor is lysine 184.

It belongs to the class I-like SAM-binding methyltransferase superfamily. RNA methyltransferase RlmE family.

The protein resides in the cytoplasm. The enzyme catalyses uridine(2552) in 23S rRNA + S-adenosyl-L-methionine = 2'-O-methyluridine(2552) in 23S rRNA + S-adenosyl-L-homocysteine + H(+). In terms of biological role, specifically methylates the uridine in position 2552 of 23S rRNA at the 2'-O position of the ribose in the fully assembled 50S ribosomal subunit. The protein is Ribosomal RNA large subunit methyltransferase E of Rhizobium meliloti (strain 1021) (Ensifer meliloti).